The primary structure comprises 2936 residues: Neurobeachin (2936 aa).

The tract at residues 961-985 (ENIKKGKKGNVSTISGLSSQTAGAK) is disordered. Residues 970-982 (NVSTISGLSSQTA) are compositionally biased toward polar residues. 2 positions are modified to phosphoserine: S1001 and S1004. Composition is skewed to polar residues over residues 1203-1220 (TSDG…SSTK) and 1231-1241 (TLETESSNSKA). Disordered stretches follow at residues 1203–1222 (TSDG…TKGL), 1231–1265 (TLET…ESGK), and 1270–1289 (IQTT…QQDR). Over residues 1253-1265 (DTERSDDGKESGK) the composition is skewed to basic and acidic residues. The segment covering 1270–1286 (IQTTATTQAVQGRSSTQ) has biased composition (polar residues). The stretch at 1316 to 1358 (TTMFRIPEFKWSPMHQRLLTDLLFALETDVHVWRSHSTKSVMD) is one WD 1 repeat. 4 disordered regions span residues 1480-1521 (QRDR…LSPI), 1639-1667 (PDTV…DSGM), 1701-1721 (VKKS…PAPS), and 1830-1850 (TGAV…VNGA). S1519 carries the post-translational modification Phosphoserine. Residues 1701-1714 (VKKSQESLTEHPSE) are compositionally biased toward basic and acidic residues. Phosphoserine occurs at positions 1704 and 1707. Positions 1835 to 1845 (SGSSSSSSSSS) are enriched in low complexity. Position 2128 is a phosphoserine (S2128). One can recognise a BEACH-type PH domain in the interval 2137-2245 (NLAGPVVLST…TVKKVVYSLP (109 aa)). The BEACH domain maps to 2264–2553 (ATPRQLYKSS…QLLIEPHPPR (290 aa)). A Phosphoserine modification is found at S2565. WD repeat units lie at residues 2708–2751 (GHWD…HIIG), 2768–2808 (GHDH…RALE), 2850–2889 (EIND…QLYI), and 2892–2931 (GCDA…WHYE).

This sequence belongs to the WD repeat neurobeachin family. In terms of assembly, interacts with RII subunit of PKA. As to expression, forebrain, brainstem and cerebellum.

It is found in the membrane. The protein localises to the endomembrane system. Its subcellular location is the postsynaptic cell membrane. Its function is as follows. Binds to type II regulatory subunits of protein kinase A and anchors/targets them to the membrane. May anchor the kinase to cytoskeletal and/or organelle-associated proteins. May have a role in membrane trafficking. This chain is Neurobeachin (Nbea), found in Mus musculus (Mouse).